We begin with the raw amino-acid sequence, 447 residues long: UDP-N-acetylmuramoylalanine--D-glutamate ligase (447 aa).

112–118 (GTNGKST) is an ATP binding site.

The protein belongs to the MurCDEF family.

It is found in the cytoplasm. The catalysed reaction is UDP-N-acetyl-alpha-D-muramoyl-L-alanine + D-glutamate + ATP = UDP-N-acetyl-alpha-D-muramoyl-L-alanyl-D-glutamate + ADP + phosphate + H(+). It functions in the pathway cell wall biogenesis; peptidoglycan biosynthesis. Cell wall formation. Catalyzes the addition of glutamate to the nucleotide precursor UDP-N-acetylmuramoyl-L-alanine (UMA). The polypeptide is UDP-N-acetylmuramoylalanine--D-glutamate ligase (Legionella pneumophila (strain Lens)).